The chain runs to 74 residues: Somatostatin-2 (74 aa).

Residues 1 to 46 constitute a propeptide that is removed on maturation; it reads ARGAGLLSQDWSAVEDLLAQMSLPEADAQREAEVVSVATGGRLNLE. Cysteines 63 and 74 form a disulfide.

Belongs to the somatostatin family.

Its subcellular location is the secreted. Functionally, somatostatin inhibits the release of somatotropin. In Myoxocephalus scorpius (Shorthorn sculpin), this protein is Somatostatin-2 (sst2).